The sequence spans 57 residues: UPF0057 membrane protein T23F2.4 (57 aa).

The next 2 membrane-spanning stretches (helical) occupy residues 3–23 and 36–56; these read ITCM…VGVF and ILLT…IILA.

This sequence belongs to the UPF0057 (PMP3) family.

The protein localises to the membrane. This Caenorhabditis elegans protein is UPF0057 membrane protein T23F2.4.